A 194-amino-acid chain; its full sequence is Fe/S biogenesis protein NfuA (194 aa).

C151 and C154 together coordinate [4Fe-4S] cluster.

The protein belongs to the NfuA family. Homodimer. It depends on [4Fe-4S] cluster as a cofactor.

In terms of biological role, involved in iron-sulfur cluster biogenesis. Binds a 4Fe-4S cluster, can transfer this cluster to apoproteins, and thereby intervenes in the maturation of Fe/S proteins. Could also act as a scaffold/chaperone for damaged Fe/S proteins. This is Fe/S biogenesis protein NfuA from Actinobacillus succinogenes (strain ATCC 55618 / DSM 22257 / CCUG 43843 / 130Z).